Consider the following 148-residue polypeptide: RING finger protein 24 (148 aa).

Residues 24–44 (IYIVVFGTAIFVFILSLLFCC) form a helical membrane-spanning segment. An RING-type zinc finger spans residues 78 to 119 (CAVCLEDFKPRDELGICPCKHAFHRKCLIKWLEVRKVCPLCN).

As to quaternary structure, interacts with TRPC1, TRPC3, TRPC4, TRPC5, TRPC6 and TRPC7.

Its subcellular location is the golgi apparatus membrane. Functionally, may play a role in TRPCs intracellular trafficking. The protein is RING finger protein 24 (RNF24) of Homo sapiens (Human).